Here is a 361-residue protein sequence, read N- to C-terminus: Peptide chain release factor 1 (361 aa).

Q237 is modified (N5-methylglutamine). The segment covering 284–296 (EDEKRRSEEDSTR) has biased composition (basic and acidic residues). The interval 284–305 (EDEKRRSEEDSTRRNLVSSGDR) is disordered.

Belongs to the prokaryotic/mitochondrial release factor family. In terms of processing, methylated by PrmC. Methylation increases the termination efficiency of RF1.

The protein localises to the cytoplasm. In terms of biological role, peptide chain release factor 1 directs the termination of translation in response to the peptide chain termination codons UAG and UAA. The polypeptide is Peptide chain release factor 1 (Shewanella piezotolerans (strain WP3 / JCM 13877)).